Here is a 711-residue protein sequence, read N- to C-terminus: Hepatocyte growth factor-like protein (711 aa).

An N-terminal signal peptide occupies residues 1–18 (MGWLPLLLLLTQCLGVPG). One can recognise a PAN domain in the interval 21-105 (SPLNDFQVLR…GRCDLFQKKD (85 aa)). 20 disulfide bridges follow: Cys-56–Cys-78, Cys-60–Cys-66, Cys-110–Cys-186, Cys-131–Cys-169, Cys-157–Cys-181, Cys-191–Cys-268, Cys-194–Cys-324, Cys-212–Cys-251, Cys-240–Cys-263, Cys-283–Cys-361, Cys-304–Cys-343, Cys-332–Cys-355, Cys-370–Cys-448, Cys-391–Cys-431, Cys-419–Cys-443, Cys-468–Cys-588, Cys-507–Cys-523, Cys-602–Cys-667, Cys-632–Cys-646, and Cys-657–Cys-685. N-linked (GlcNAc...) asparagine glycosylation is present at Asn-72. 4 Kringle domains span residues 110-186 (CIMN…IKSC), 191-268 (CVWC…LPRC), 283-361 (CFRG…IRRC), and 370-448 (CYHG…LRRC). N-linked (GlcNAc...) asparagine glycosylation occurs at Asn-296. The Peptidase S1 domain occupies 484–709 (VVGGHPGNSP…FVDWIHKVMR (226 aa)). Residue Asn-615 is glycosylated (N-linked (GlcNAc...) asparagine).

This sequence belongs to the peptidase S1 family. Plasminogen subfamily. As to quaternary structure, dimer of an alpha chain and a beta chain linked by a disulfide bond. Interacts (via beta chain) with MST1R (via SEMA domain). Cleaved after Arg-483, probably by HPN/Hepsin, to yield the active form consisting of two disulfide-linked chains.

The protein localises to the secreted. In Homo sapiens (Human), this protein is Hepatocyte growth factor-like protein (MST1).